A 541-amino-acid polypeptide reads, in one-letter code: Membrane protein insertase YidC (541 aa).

The next 6 helical transmembrane spans lie at 6–26 (NILL…WQAD), 325–345 (LVVD…LLMF), 349–369 (FVGN…GLLF), 420–440 (GGCL…WVLL), 457–477 (LSVQ…MFVM), and 500–520 (VIFT…WLVG).

Belongs to the OXA1/ALB3/YidC family. Type 1 subfamily. As to quaternary structure, interacts with the Sec translocase complex via SecD. Specifically interacts with transmembrane segments of nascent integral membrane proteins during membrane integration.

The protein resides in the cell inner membrane. In terms of biological role, required for the insertion and/or proper folding and/or complex formation of integral membrane proteins into the membrane. Involved in integration of membrane proteins that insert both dependently and independently of the Sec translocase complex, as well as at least some lipoproteins. Aids folding of multispanning membrane proteins. The protein is Membrane protein insertase YidC of Shewanella baltica (strain OS223).